Reading from the N-terminus, the 1342-residue chain is DNA-directed RNA polymerase subunit beta (1342 aa).

This sequence belongs to the RNA polymerase beta chain family. In terms of assembly, the RNAP catalytic core consists of 2 alpha, 1 beta, 1 beta' and 1 omega subunit. When a sigma factor is associated with the core the holoenzyme is formed, which can initiate transcription.

It carries out the reaction RNA(n) + a ribonucleoside 5'-triphosphate = RNA(n+1) + diphosphate. Its function is as follows. DNA-dependent RNA polymerase catalyzes the transcription of DNA into RNA using the four ribonucleoside triphosphates as substrates. The sequence is that of DNA-directed RNA polymerase subunit beta from Salmonella typhi.